We begin with the raw amino-acid sequence, 790 residues long: LMBR1 domain-containing protein 2 homolog B (790 aa).

Over residues 1 to 21 (MSSNTTTPTPTSTPTPTSSPS) the composition is skewed to low complexity. A disordered region spans residues 1–22 (MSSNTTTPTPTSTPTPTSSPSI). The next 5 membrane-spanning stretches (helical) occupy residues 34 to 54 (FGNLLFFAISLVLCGVVVLIG), 66 to 86 (IYATFFSFLGWFMCFSIAYLV), 128 to 148 (FLYFGSLILCWVIFPVLQSFS), 167 to 187 (VILYTFMFIAGLIGIIVILSV), and 195 to 215 (FLSFVMLLANVYGVILITITM). A coiled-coil region spans residues 236 to 266 (LRNYRVEAVVLKTELEDVKRQLIDHLKLIKT). Transmembrane regions (helical) follow at residues 401-421 (FIIAGLVCVCLSGIILWSEIV), 442-462 (PGIGLQIFCFIPMIYMCVCSY), and 539-559 (FTLFFPIFMIVVCVISFFNLH). 3 disordered regions span residues 630 to 665 (SQLDGASGAHREPSIDSSNRYKPTPTKTSINIPKLS), 701 to 751 (LGEK…TKDK), and 765 to 790 (SFQDDDDHTFDDIEMGAYGTGRKNKK). Positions 644 to 665 (IDSSNRYKPTPTKTSINIPKLS) are enriched in polar residues. Positions 706–734 (NASNNNNNNNNNNNNNNSNNKNSNNNNNS) are enriched in low complexity. Positions 735 to 746 (ILTSNYESYSTP) are enriched in polar residues. Residues 766-778 (FQDDDDHTFDDIE) are compositionally biased toward acidic residues.

Belongs to the LIMR family.

The protein resides in the membrane. This chain is LMBR1 domain-containing protein 2 homolog B, found in Dictyostelium discoideum (Social amoeba).